Consider the following 169-residue polypeptide: 16S rRNA aminocarboxypropyltransferase (169 aa).

Threonine 15, valine 65, leucine 88, and threonine 107 together coordinate S-adenosyl-L-methionine.

Belongs to the TDD superfamily. TSR3 family.

The protein resides in the cytoplasm. It carries out the reaction an N(1)-methylpseudouridine in rRNA + S-adenosyl-L-methionine = N(1)-methyl-N(3)-[(3S)-3-amino-3-carboxypropyl]pseudouridine in rRNA + S-methyl-5'-thioadenosine + H(+). In terms of biological role, aminocarboxypropyltransferase that catalyzes the aminocarboxypropyl transfer on pseudouridine corresponding to position 914 in M.jannaschii 16S rRNA. It constitutes the last step in biosynthesis of the hypermodified N1-methyl-N3-(3-amino-3-carboxypropyl) pseudouridine (m1acp3-Psi). The sequence is that of 16S rRNA aminocarboxypropyltransferase from Methanopyrus kandleri (strain AV19 / DSM 6324 / JCM 9639 / NBRC 100938).